We begin with the raw amino-acid sequence, 215 residues long: 2-phospho-L-lactate guanylyltransferase (215 aa).

Belongs to the CofC family. As to quaternary structure, homodimer.

It carries out the reaction (2S)-2-phospholactate + GTP + H(+) = (2S)-lactyl-2-diphospho-5'-guanosine + diphosphate. It functions in the pathway cofactor biosynthesis; coenzyme F420 biosynthesis. In terms of biological role, guanylyltransferase that catalyzes the activation of (2S)-2-phospholactate (2-PL) as (2S)-lactyl-2-diphospho-5'-guanosine, via the condensation of 2-PL with GTP. It is involved in the biosynthesis of coenzyme F420, a hydride carrier cofactor. In Methanoculleus marisnigri (strain ATCC 35101 / DSM 1498 / JR1), this protein is 2-phospho-L-lactate guanylyltransferase.